The following is a 261-amino-acid chain: Protein-ADP-ribose hydrolase (261 aa).

The 188-residue stretch at 74-261 folds into the Macro domain; it reads ADLKPVTGRG…DEALYNKLMS (188 aa). D93, I94, and N107 together coordinate ADP-D-ribose. Positions 113, 118, and 120 each coordinate Zn(2+). 7 residues coordinate ADP-D-ribose: C120, I121, D122, S211, T212, G213, and F215.

Belongs to the MacroD-type family. Zn-Macro subfamily. It depends on Zn(2+) as a cofactor.

It carries out the reaction 4-O-(ADP-D-ribosyl)-L-aspartyl-[protein] + H2O = L-aspartyl-[protein] + ADP-D-ribose + H(+). Its function is as follows. ADP-ribosylhydrolase that specifically reverses the SirTM-mediated mono-ADP-ribosylation at an asparatate residue of GcvH-L, by releasing ADP-ribose from the target protein. May play a role in the regulation of the response to host-induced oxidative stress. In Treponema medium, this protein is Protein-ADP-ribose hydrolase.